Reading from the N-terminus, the 315-residue chain is Zinc finger transcription factor ref-2 (315 aa).

A C2H2-type 1; atypical zinc finger spans residues 83-112 (VQCLWETNGQVCMHVCQNSGELSTHISSNH). The C2H2-type 2; degenerate zinc-finger motif lies at 124–146 (KGCDREFKMFKAKYKLVNHMRVH). C2H2-type zinc fingers lie at residues 152 to 174 (FLCD…KRIH), 180 to 204 (FQCT…MHVH), and 210 to 234 (YSCM…TKVH). The segment at 225–270 (SSLRKHTKVHENEKKSQLSPEHDESSDSGNASIGTPTTDESLTFSP) is disordered. A compositionally biased stretch (basic and acidic residues) spans 233–249 (VHENEKKSQLSPEHDES). The span at 251 to 270 (DSGNASIGTPTTDESLTFSP) shows a compositional bias: polar residues.

As to quaternary structure, interacts with TCF transcription factor pop-1; the interaction is direct and facilitates transcriptional activation; transcription may be repressed by beta-catenin/sys-1.

The protein localises to the nucleus. The protein resides in the cytoplasm. In terms of biological role, transcription factor. Modulates expression of target genes by binding to regulatory elements. Required for normal cell division timing and cell positioning in anterior lineages, acting in a cell-autonomous manner. Required for development, fusion and fate of cells of the ventral epidermis, the Pn.p cells, during larval development; acts in concert with homeobox genes lin-39 and mab-5. Required for the specification of the AIY interneuron. In complex with TCF transcription factor pop-1, positively modulates expression of LIM/homeobox protein ttx-3 in anterior daughter cells of the SMDD/AIY neuron lineage. The sequence is that of Zinc finger transcription factor ref-2 from Caenorhabditis elegans.